A 385-amino-acid chain; its full sequence is MAKEITVLGSTGSIGRQTLEVVAAHPGRFRVAALVAARNDELLAAQVRRFRPRLAVLLDEERARVLAEMVSDPGIRILAGEEGLMAAACLEGVELVVAAMVGIRSLKAILAALEAGKDIALANKEVLVAAGQLVMDRARRLSRQIIPVDSEHSAIFQCLRQGGRVAEVIITASGGPLRQMPRAEMANVTPEQALNHPTWVMGPKITIDSATLMNKGLEVIEAKHLFNLDFDQIKVLIHPQSVVHALVRYSDGALFAQLGPADMRLPIQYALTWPERWDLDVQPLDLAALGHLEFALPDLERFPCLELALQAGRAGGTYPAVLSAADEVAVEYFLAGKITLTAISQVVGRVLDEHQPEPVPDLEGILAADAWARRRAGAVAEGLSF.

Threonine 11, glycine 12, serine 13, isoleucine 14, alanine 37, arginine 38, asparagine 39, and asparagine 123 together coordinate NADPH. Lysine 124 contributes to the 1-deoxy-D-xylulose 5-phosphate binding site. Glutamate 125 provides a ligand contact to NADPH. Aspartate 149 is a binding site for Mn(2+). Positions 150, 151, 173, and 196 each coordinate 1-deoxy-D-xylulose 5-phosphate. A Mn(2+)-binding site is contributed by glutamate 151. NADPH is bound at residue glycine 202. Serine 209, asparagine 214, lysine 215, and glutamate 218 together coordinate 1-deoxy-D-xylulose 5-phosphate. Residue glutamate 218 coordinates Mn(2+).

It belongs to the DXR family. Mg(2+) is required as a cofactor. It depends on Mn(2+) as a cofactor.

It carries out the reaction 2-C-methyl-D-erythritol 4-phosphate + NADP(+) = 1-deoxy-D-xylulose 5-phosphate + NADPH + H(+). It functions in the pathway isoprenoid biosynthesis; isopentenyl diphosphate biosynthesis via DXP pathway; isopentenyl diphosphate from 1-deoxy-D-xylulose 5-phosphate: step 1/6. Functionally, catalyzes the NADPH-dependent rearrangement and reduction of 1-deoxy-D-xylulose-5-phosphate (DXP) to 2-C-methyl-D-erythritol 4-phosphate (MEP). The polypeptide is 1-deoxy-D-xylulose 5-phosphate reductoisomerase (Moorella thermoacetica (strain ATCC 39073 / JCM 9320)).